Consider the following 580-residue polypeptide: NADH-ubiquinone oxidoreductase chain 5 (580 aa).

16 helical membrane-spanning segments follow: residues 12–32 (FYILIFISFTLFILSLKFLLM), 50–70 (IVMTFLFDWMSLMFMSFVLLI), 92–112 (ILLVLMFVMSMMMLIISPNLI), 113–133 (SILLGWDGLGLVSYCLVIYFQ), 153–173 (VALLLAIAWMLNYGSWNYIFY), 176–196 (MMKNNFEMMVIGGLVMLAAMT), 218–240 (SALVHSSTLVTAGVYLLIRFNIL), 249–269 (FLLLVSGLTMFMAGLGANFEF), 274–294 (IIALSTLSQLGLMMSILSIGY), 300–320 (FHLLTHALFKALLFMCAGVII), 343–363 (CSCFNIANLALCGMPFLAGFY), 378–400 (NFFSFFLFFFSTGLTVCYSFRLV), 427–447 (IFFLMVMAIIGGSMLSWLMFF), 464–484 (MVCLLGGFTGYLISNVNFFFI), 500–520 (MWFMPLISTVGVVKWPLILGM), and 560–580 (IYLLSYMLWVIILVSMMLFLN).

This sequence belongs to the complex I subunit 5 family.

The protein resides in the mitochondrion inner membrane. The catalysed reaction is a ubiquinone + NADH + 5 H(+)(in) = a ubiquinol + NAD(+) + 4 H(+)(out). In terms of biological role, core subunit of the mitochondrial membrane respiratory chain NADH dehydrogenase (Complex I) that is believed to belong to the minimal assembly required for catalysis. Complex I functions in the transfer of electrons from NADH to the respiratory chain. The immediate electron acceptor for the enzyme is believed to be ubiquinone. This Aedes aegypti (Yellowfever mosquito) protein is NADH-ubiquinone oxidoreductase chain 5.